The following is an 83-amino-acid chain: Large ribosomal subunit protein bL31B (83 aa).

The protein belongs to the bacterial ribosomal protein bL31 family. Type B subfamily. As to quaternary structure, part of the 50S ribosomal subunit.

Binds the 23S rRNA. The chain is Large ribosomal subunit protein bL31B from Hydrogenovibrio crunogenus (strain DSM 25203 / XCL-2) (Thiomicrospira crunogena).